The primary structure comprises 402 residues: Elongation factor Tu (402 aa).

In terms of domain architecture, tr-type G spans 16–211 (KEHINIGTIG…AVDSYIDSPV (196 aa)). A G1 region spans residues 25–32 (GHVDHGKT). 25–32 (GHVDHGKT) contributes to the GTP binding site. Position 32 (Thr-32) interacts with Mg(2+). The segment at 66 to 70 (GITIN) is G2. Positions 87-90 (DCPG) are G3. GTP is bound by residues 87 to 91 (DCPGH) and 142 to 145 (NKID). Residues 142 to 145 (NKID) are G4. Residues 181–183 (SAR) form a G5 region.

Belongs to the TRAFAC class translation factor GTPase superfamily. Classic translation factor GTPase family. EF-Tu/EF-1A subfamily. Monomer.

The protein resides in the cytoplasm. It catalyses the reaction GTP + H2O = GDP + phosphate + H(+). Its function is as follows. GTP hydrolase that promotes the GTP-dependent binding of aminoacyl-tRNA to the A-site of ribosomes during protein biosynthesis. This chain is Elongation factor Tu, found in Mesomycoplasma hyopneumoniae (strain 232) (Mycoplasma hyopneumoniae).